Reading from the N-terminus, the 378-residue chain is Carbamoyl phosphate synthase small chain (378 aa).

Positions 1–189 (MTKPAILALA…DSHPEIPAGE (189 aa)) are CPSase. The L-glutamine site is built by Ser-47, Gly-241, and Gly-243. One can recognise a Glutamine amidotransferase type-1 domain in the interval 193–378 (HVVAYDYGVK…RFISAMAERR (186 aa)). Cys-269 acts as the Nucleophile in catalysis. 5 residues coordinate L-glutamine: Leu-270, Gln-273, Asn-311, Gly-313, and Phe-314. Residues His-353 and Glu-355 contribute to the active site.

This sequence belongs to the CarA family. Composed of two chains; the small (or glutamine) chain promotes the hydrolysis of glutamine to ammonia, which is used by the large (or ammonia) chain to synthesize carbamoyl phosphate. Tetramer of heterodimers (alpha,beta)4.

The catalysed reaction is hydrogencarbonate + L-glutamine + 2 ATP + H2O = carbamoyl phosphate + L-glutamate + 2 ADP + phosphate + 2 H(+). The enzyme catalyses L-glutamine + H2O = L-glutamate + NH4(+). Its pathway is amino-acid biosynthesis; L-arginine biosynthesis; carbamoyl phosphate from bicarbonate: step 1/1. The protein operates within pyrimidine metabolism; UMP biosynthesis via de novo pathway; (S)-dihydroorotate from bicarbonate: step 1/3. Functionally, small subunit of the glutamine-dependent carbamoyl phosphate synthetase (CPSase). CPSase catalyzes the formation of carbamoyl phosphate from the ammonia moiety of glutamine, carbonate, and phosphate donated by ATP, constituting the first step of 2 biosynthetic pathways, one leading to arginine and/or urea and the other to pyrimidine nucleotides. The small subunit (glutamine amidotransferase) binds and cleaves glutamine to supply the large subunit with the substrate ammonia. The sequence is that of Carbamoyl phosphate synthase small chain from Pseudomonas aeruginosa (strain ATCC 15692 / DSM 22644 / CIP 104116 / JCM 14847 / LMG 12228 / 1C / PRS 101 / PAO1).